We begin with the raw amino-acid sequence, 358 residues long: Mesaconyl-CoA hydratase (358 aa).

The MaoC-like domain occupies 44–148 (AHDPGLRLTH…TSSSRPQYGI (105 aa)).

The protein belongs to the enoyl-CoA hydratase/isomerase family.

The enzyme catalyses (2R,3S)-beta-methylmalyl-CoA = 2-methylfumaryl-CoA + H2O. Functionally, involved in the methylaspartate cycle. Catalyzes the reversible hydration of mesaconyl-CoA (2-methylfumaryl-CoA) to yield beta-methylmalyl-CoA ((2R,3S)-beta-methylmalyl-CoA). The polypeptide is Mesaconyl-CoA hydratase (Haloarcula marismortui (strain ATCC 43049 / DSM 3752 / JCM 8966 / VKM B-1809) (Halobacterium marismortui)).